The chain runs to 284 residues: 2-dehydro-3-deoxyphosphooctonate aldolase (284 aa).

This sequence belongs to the KdsA family.

The protein localises to the cytoplasm. It carries out the reaction D-arabinose 5-phosphate + phosphoenolpyruvate + H2O = 3-deoxy-alpha-D-manno-2-octulosonate-8-phosphate + phosphate. Its pathway is carbohydrate biosynthesis; 3-deoxy-D-manno-octulosonate biosynthesis; 3-deoxy-D-manno-octulosonate from D-ribulose 5-phosphate: step 2/3. The protein operates within bacterial outer membrane biogenesis; lipopolysaccharide biosynthesis. The sequence is that of 2-dehydro-3-deoxyphosphooctonate aldolase from Shigella boydii serotype 18 (strain CDC 3083-94 / BS512).